Reading from the N-terminus, the 173-residue chain is Bursicon (173 aa).

An N-terminal signal peptide occupies residues 1-32 (MLRHLLRHENNKVFVLILLYCVLVSILKLCTA). Intrachain disulfides connect Cys-52-Cys-101, Cys-66-Cys-115, Cys-76-Cys-136, Cys-80-Cys-138, and Cys-98-Cys-141. The CTCK domain occupies 52–142 (CQVTPVIHVL…PLECMCRPCT (91 aa)).

Heterodimer of Burs and Pburs. Expressed in one to two pairs of neurons in each of the thoracic and abdominal neuromeres of the larval CNS. Coexpressed with CCAP in most CCAP-specific neurons. Coexpressed with Pburs in four bilateral neurons in thoracic and abdominal neuromeres of the ventral nervous system.

It localises to the secreted. Its function is as follows. Final heterodimeric neurohormone released at the end of the molting cycle, involved in the sclerotization (tanning) of the insect cuticle, melanization and wing spreading. Heterodimer specifically activates the G protein-coupled receptor rk. The chain is Bursicon from Drosophila melanogaster (Fruit fly).